Consider the following 413-residue polypeptide: Aminopeptidase 2 (413 aa).

The a divalent metal cation site is built by Glu250, Glu316, Glu340, His345, His378, and Asp380.

This sequence belongs to the peptidase M29 family. In terms of assembly, homodimer. Co(2+) is required as a cofactor. The cofactor is Zn(2+). It depends on Mg(2+) as a cofactor.

Broad specificity metal-dependent exopeptidase, releasing all N-terminal amino acids. This is Aminopeptidase 2 from Geobacillus stearothermophilus (Bacillus stearothermophilus).